Here is a 292-residue protein sequence, read N- to C-terminus: NAD kinase (292 aa).

Residue Asp74 is the Proton acceptor of the active site. NAD(+) contacts are provided by residues 74–75 (DG), 147–148 (NE), Asp177, and 188–193 (TGYSLS).

The protein belongs to the NAD kinase family. The cofactor is a divalent metal cation.

It localises to the cytoplasm. The enzyme catalyses NAD(+) + ATP = ADP + NADP(+) + H(+). Functionally, involved in the regulation of the intracellular balance of NAD and NADP, and is a key enzyme in the biosynthesis of NADP. Catalyzes specifically the phosphorylation on 2'-hydroxyl of the adenosine moiety of NAD to yield NADP. The polypeptide is NAD kinase (Cytophaga hutchinsonii (strain ATCC 33406 / DSM 1761 / CIP 103989 / NBRC 15051 / NCIMB 9469 / D465)).